A 476-amino-acid polypeptide reads, in one-letter code: MAQYSAQFPHAKVLVLGDVMLDRYWFGATNRISPEAPVPVVRVKKHEERAGGAANVAMNIASLNVPVRLLGLTGDDEAGNALTGLLEKQKICCDFVKLSSHPTITKLRILSRHQQLLRLDFEENFNNVHSDNLLTKLESAVKNVGALILSDYGKGTLNDVQHMIRIARQAKVPVLIDPKGTDFERYRGATLLTPNMSEFEAVAGVCQSDEDIVEKGLKMIADYDLTALLITRSEKGMTLLRPNQPAFHLPTEAKEVYDVTGAGDTVISVLATALADGRTVEEACYLANVAAGIVVGKLGTSAVSTVELENAIHGRTVSGFGIMTENELKNAVKLAKERGEKIVMTNGCFDILHPGHVSYLENARKLGDRLIVAVNTDESVKRLKGETRPINDLASRMAVLAGLSSVDWLVAFDEDTPQRLIGEILPDLLVKGGDYKPEEIAGSKEVWANGGDVSVLNFENGCSTSNVIKKIRDLKD.

Positions 1 to 319 are ribokinase; it reads MAQYSAQFPH…NAIHGRTVSG (319 aa). ATP is bound at residue 195-198; that stretch reads NMSE. Asp264 is an active-site residue. The tract at residues 344 to 476 is cytidylyltransferase; the sequence is MTNGCFDILH…VIKKIRDLKD (133 aa).

This sequence in the N-terminal section; belongs to the carbohydrate kinase PfkB family. In the C-terminal section; belongs to the cytidylyltransferase family. As to quaternary structure, homodimer.

It carries out the reaction D-glycero-beta-D-manno-heptose 7-phosphate + ATP = D-glycero-beta-D-manno-heptose 1,7-bisphosphate + ADP + H(+). It catalyses the reaction D-glycero-beta-D-manno-heptose 1-phosphate + ATP + H(+) = ADP-D-glycero-beta-D-manno-heptose + diphosphate. Its pathway is nucleotide-sugar biosynthesis; ADP-L-glycero-beta-D-manno-heptose biosynthesis; ADP-L-glycero-beta-D-manno-heptose from D-glycero-beta-D-manno-heptose 7-phosphate: step 1/4. It participates in nucleotide-sugar biosynthesis; ADP-L-glycero-beta-D-manno-heptose biosynthesis; ADP-L-glycero-beta-D-manno-heptose from D-glycero-beta-D-manno-heptose 7-phosphate: step 3/4. Catalyzes the phosphorylation of D-glycero-D-manno-heptose 7-phosphate at the C-1 position to selectively form D-glycero-beta-D-manno-heptose-1,7-bisphosphate. Its function is as follows. Catalyzes the ADP transfer from ATP to D-glycero-beta-D-manno-heptose 1-phosphate, yielding ADP-D-glycero-beta-D-manno-heptose. This is Bifunctional protein HldE from Actinobacillus succinogenes (strain ATCC 55618 / DSM 22257 / CCUG 43843 / 130Z).